A 73-amino-acid polypeptide reads, in one-letter code: Putative membrane protein insertion efficiency factor (73 aa).

Belongs to the UPF0161 family.

The protein localises to the cell inner membrane. Could be involved in insertion of integral membrane proteins into the membrane. The sequence is that of Putative membrane protein insertion efficiency factor from Bacteroides fragilis (strain ATCC 25285 / DSM 2151 / CCUG 4856 / JCM 11019 / LMG 10263 / NCTC 9343 / Onslow / VPI 2553 / EN-2).